We begin with the raw amino-acid sequence, 339 residues long: Ketol-acid reductoisomerase (NADP(+)) (339 aa).

A KARI N-terminal Rossmann domain is found at 1–182 (MRVYYDRDAD…GGGRAGIIET (182 aa)). NADP(+) contacts are provided by residues 24 to 27 (YGSQ), Arg48, Ser51, Ser53, and 83 to 86 (DELQ). His108 is a catalytic residue. Gly134 lines the NADP(+) pocket. The KARI C-terminal knotted domain occupies 183 to 328 (TFKEECETDL…ERLRAMMPWI (146 aa)). Asp191, Glu195, Glu227, and Glu231 together coordinate Mg(2+). Ser252 serves as a coordination point for substrate.

The protein belongs to the ketol-acid reductoisomerase family. The cofactor is Mg(2+).

It catalyses the reaction (2R)-2,3-dihydroxy-3-methylbutanoate + NADP(+) = (2S)-2-acetolactate + NADPH + H(+). It carries out the reaction (2R,3R)-2,3-dihydroxy-3-methylpentanoate + NADP(+) = (S)-2-ethyl-2-hydroxy-3-oxobutanoate + NADPH + H(+). It participates in amino-acid biosynthesis; L-isoleucine biosynthesis; L-isoleucine from 2-oxobutanoate: step 2/4. It functions in the pathway amino-acid biosynthesis; L-valine biosynthesis; L-valine from pyruvate: step 2/4. Functionally, involved in the biosynthesis of branched-chain amino acids (BCAA). Catalyzes an alkyl-migration followed by a ketol-acid reduction of (S)-2-acetolactate (S2AL) to yield (R)-2,3-dihydroxy-isovalerate. In the isomerase reaction, S2AL is rearranged via a Mg-dependent methyl migration to produce 3-hydroxy-3-methyl-2-ketobutyrate (HMKB). In the reductase reaction, this 2-ketoacid undergoes a metal-dependent reduction by NADPH to yield (R)-2,3-dihydroxy-isovalerate. In Methylobacterium nodulans (strain LMG 21967 / CNCM I-2342 / ORS 2060), this protein is Ketol-acid reductoisomerase (NADP(+)).